A 542-amino-acid polypeptide reads, in one-letter code: MFKLVSYIILSWVLVCLAQPDVSVVASVVSCICGYSLLWAGLFALVEQLSWKKVWCIAFIWTWTVEGAHFSWMLEDLYVGTSIYFVWGILLSYLATLFASFSCLVVWCCRKQYRGALVWLPGVWVAIEAIRYYGLLSGVSFDFIGWPLTATAYGRQFGSFFGWAGQSFLVIAANICCFAVCLLKHSFSKGLWLTLCAFPYLLGGAHYEYLKKHFSDSEVLRVAIVQPGYSPHMHAGRTASAIWRGLVSLCQTIQTPVDVIVFPEVSVPFGLHRQAYTLHENQPVLESLLPNKSWGEFFTNLDWIQAIAERYQCTVIMGMERWENKGGILHLYNAAECVSREGEITSYDKRILVPGGEYIPGGKIGFSLCQTFFPEFALPFQRLPGEFSGVVNITERIKAGISICYEETFGYAIRPYKRQQADILVNLTNDGWYPRSRLPLVHFYHGMLRNQELGIPCIRACRTGVSAAVDSLGRIVGILPWESRTCPVSTGVLQVSVPLYSYHTVYARLGDAPLLLIAVCSVIGAIAYFYRKKKETPPQTFF.

6 consecutive transmembrane segments (helical) span residues 24-44 (VVAS…GLFA), 54-74 (VWCI…SWML), 85-105 (FVWG…SCLV), 116-136 (ALVW…YGLL), 160-180 (FFGW…CFAV), and 190-210 (GLWL…YEYL). The CN hydrolase domain maps to 220 to 499 (LRVAIVQPGY…TGVLQVSVPL (280 aa)). Glu264 functions as the Proton acceptor in the catalytic mechanism. Lys349 is a catalytic residue. Cys404 functions as the Nucleophile in the catalytic mechanism. A helical membrane pass occupies residues 509-529 (LGDAPLLLIAVCSVIGAIAYF).

Belongs to the CN hydrolase family. Apolipoprotein N-acyltransferase subfamily.

Its subcellular location is the cell inner membrane. The catalysed reaction is N-terminal S-1,2-diacyl-sn-glyceryl-L-cysteinyl-[lipoprotein] + a glycerophospholipid = N-acyl-S-1,2-diacyl-sn-glyceryl-L-cysteinyl-[lipoprotein] + a 2-acyl-sn-glycero-3-phospholipid + H(+). It participates in protein modification; lipoprotein biosynthesis (N-acyl transfer). Functionally, catalyzes the phospholipid dependent N-acylation of the N-terminal cysteine of apolipoprotein, the last step in lipoprotein maturation. This chain is Apolipoprotein N-acyltransferase, found in Chlamydia trachomatis serovar D (strain ATCC VR-885 / DSM 19411 / UW-3/Cx).